The following is a 178-amino-acid chain: Interleukin-10 (178 aa).

The N-terminal stretch at 1 to 18 (MHSSALLCCLVLLTGVRA) is a signal peptide. Cystine bridges form between cysteine 30/cysteine 126 and cysteine 80/cysteine 132. Asparagine 134 carries N-linked (GlcNAc...) asparagine glycosylation.

This sequence belongs to the IL-10 family. In terms of assembly, homodimer. Interacts with IL10RA and IL10RB.

It localises to the secreted. Major immune regulatory cytokine that acts on many cells of the immune system where it has profound anti-inflammatory functions, limiting excessive tissue disruption caused by inflammation. Mechanistically, IL10 binds to its heterotetrameric receptor comprising IL10RA and IL10RB leading to JAK1 and STAT2-mediated phosphorylation of STAT3. In turn, STAT3 translocates to the nucleus where it drives expression of anti-inflammatory mediators. Targets antigen-presenting cells (APCs) such as macrophages and monocytes and inhibits their release of pro-inflammatory cytokines including granulocyte-macrophage colony-stimulating factor /GM-CSF, granulocyte colony-stimulating factor/G-CSF, IL-1 alpha, IL-1 beta, IL-6, IL-8 and TNF-alpha. Also interferes with antigen presentation by reducing the expression of MHC-class II and co-stimulatory molecules, thereby inhibiting their ability to induce T cell activation. In addition, controls the inflammatory response of macrophages by reprogramming essential metabolic pathways including mTOR signaling. The protein is Interleukin-10 (IL10) of Macaca nemestrina (Pig-tailed macaque).